The chain runs to 1021 residues: Sodium/potassium-transporting ATPase subunit alpha-1 (1021 aa).

Residues 1–5 constitute a propeptide that is removed on maturation; the sequence is MGKGV. Residues 1-11 are compositionally biased toward basic and acidic residues; that stretch reads MGKGVGRDKYE. Positions 1–37 are disordered; the sequence is MGKGVGRDKYEPAAVSEHGDKKKAKKERDMDELKKEV. Residues 6–85 are Cytoplasmic-facing; the sequence is GRDKYEPAAV…NALTPPPTTP (80 aa). Position 9 is an N6-acetyllysine (Lys-9). Tyr-10 carries the phosphotyrosine modification. Residue Ser-16 is modified to Phosphoserine; by PKC. Lys-21 is modified (N6-acetyllysine). A compositionally biased stretch (basic and acidic residues) spans 26-37; that stretch reads KERDMDELKKEV. Phosphoserine occurs at positions 38 and 45. A phosphoinositide-3 kinase binding region spans residues 80-82; it reads PPP. The helical transmembrane segment at 86–106 threads the bilayer; it reads EWVKFCRQLFGGFSMLLWIGA. Residues 107–129 lie on the Extracellular side of the membrane; that stretch reads ILCFLAYGIQAATEEEPQNDNLY. Residues 130–150 form a helical membrane-spanning segment; that stretch reads LGVVLSAVVIITGCFSYYQEA. The Cytoplasmic segment spans residues 151–286; that stretch reads KSSKIMESFK…GGQTPIAAEI (136 aa). Positions 214–233 are disordered; sequence SSLTGESEPQTRSPDFTNEN. Ser-226 is modified (phosphoserine). Tyr-258 bears the Phosphotyrosine mark. Residues 287–306 traverse the membrane as a helical segment; the sequence is EHFIHIITGVAVFLGVSFFI. At 307 to 318 the chain is on the extracellular side; that stretch reads LSLILEYTWLEA. Residues 319–336 traverse the membrane as a helical segment; the sequence is VIFLIGIIVANVPEGLLA. The Cytoplasmic segment spans residues 337–770; it reads TVTVCLTLTA…EEGRLIFDNL (434 aa). Residue Asp-374 is the 4-aspartylphosphate intermediate of the active site. Residues Ser-450 and Ser-482 each carry the phosphoserine modification. Lys-485 lines the ATP pocket. At Tyr-540 the chain carries Phosphotyrosine. The interval 594 to 715 is mediates interaction with SCN7A; sequence RAAVPDAVGK…QGAIVAVTGD (122 aa). Lys-659 is modified (N6-succinyllysine). Phosphoserine occurs at positions 666 and 673. Residues Asp-715 and Asp-719 each contribute to the Mg(2+) site. Residues 771–790 traverse the membrane as a helical segment; sequence KKSIAYTLTSNIPEITPFLI. The Extracellular segment spans residues 791-800; sequence FIIANIPLPL. A helical membrane pass occupies residues 801-821; it reads GTVTILCIDLGTDMVPAISLA. Residues 822-841 lie on the Cytoplasmic side of the membrane; that stretch reads YEQAESDIMKRQPRNPKTDK. A helical membrane pass occupies residues 842 to 864; the sequence is LVNEQLISMAYGQIGMIQALGGF. Topologically, residues 865 to 916 are extracellular; it reads FTYFVILAENGFLPIHLLGLRVNWDDRWINDVEDSYGQQWTYEQRKIVEFTC. Residues 917-936 form a helical membrane-spanning segment; it reads HTPFFVTIVVVQWADLVICK. Residues 937-949 are Cytoplasmic-facing; the sequence is TRRNSVFQQGMKN. A Phosphoserine; by PKA modification is found at Ser-941. Residues 950-968 form a helical membrane-spanning segment; the sequence is KILIFGLFEETALAAFLSY. The Extracellular segment spans residues 969 to 983; that stretch reads CPGMGVALRMYPLKP. Residues 984-1004 form a helical membrane-spanning segment; the sequence is TWWFCAFPYSLLIFVYDEVRK. At 1005-1021 the chain is on the cytoplasmic side; that stretch reads LIIRRRPGGWVEKETYY.

This sequence belongs to the cation transport ATPase (P-type) (TC 3.A.3) family. Type IIC subfamily. The sodium/potassium-transporting ATPase is composed of a catalytic alpha subunit, an auxiliary non-catalytic beta subunit and an additional regulatory subunit. Interacts with regulatory subunit FXYD1. Interacts with regulatory subunit FXYD3. Interacts with SIK1. Interacts with SLC35G1 and STIM1. Interacts with CLN3; this interaction regulates the sodium/potassium-transporting ATPase complex localization at the plasma membrane. Interacts with SCN7A; activates ATP1A1 P-type sodium:potassium-exchanging transporter activity which indirectly signals to nearby neurons to regulate sodium homeostasis. In terms of processing, phosphorylation on Tyr-10 modulates pumping activity. Phosphorylation of Ser-941 by PKA modulates the response of ATP1A1 to PKC. Dephosphorylation by protein phosphatase 2A (PP2A) following increases in intracellular sodium, leading to increase catalytic activity.

Its subcellular location is the cell membrane. The protein resides in the basolateral cell membrane. The protein localises to the sarcolemma. It localises to the cell projection. It is found in the axon. Its subcellular location is the melanosome. The enzyme catalyses K(+)(out) + Na(+)(in) + ATP + H2O = K(+)(in) + Na(+)(out) + ADP + phosphate + H(+). Functionally, this is the catalytic component of the active enzyme, which catalyzes the hydrolysis of ATP coupled with the exchange of sodium and potassium ions across the plasma membrane. This action creates the electrochemical gradient of sodium and potassium ions, providing the energy for active transport of various nutrients. Could also be part of an osmosensory signaling pathway that senses body-fluid sodium levels and controls salt intake behavior as well as voluntary water intake to regulate sodium homeostasis. The chain is Sodium/potassium-transporting ATPase subunit alpha-1 (ATP1A1) from Sus scrofa (Pig).